Here is a 495-residue protein sequence, read N- to C-terminus: uncharacterized protein (495 aa).

The segment at Ser337 to Lys360 is disordered.

This is an uncharacterized protein from Caenorhabditis elegans.